The following is a 282-amino-acid chain: Transcription repressor OFP18 (282 aa).

Positions 1-85 (MVRKMKLPFL…YSSFSSTSHA (85 aa)) are disordered. Over residues 15-35 (SSSSFSSNSSSSSSSWPWPSS) the composition is skewed to low complexity. Over residues 36–47 (HQQNLKTISSKA) the composition is skewed to polar residues. Positions 66 to 85 (SFSSSPSSSSYSSFSSTSHA) are enriched in low complexity. In terms of domain architecture, OVATE spans 139 to 199 (LSLESNDPYT…FAAFVDLVLN (61 aa)).

As to expression, expressed in roots and shoots.

The protein resides in the nucleus. Functionally, transcriptional repressor that regulates multiple aspects of plant growth and development through the regulation of BEL1-LIKE (BLH) and KNOX TALE (KNAT) homeodomain transcription factors. This chain is Transcription repressor OFP18 (OFP18), found in Arabidopsis thaliana (Mouse-ear cress).